A 167-amino-acid chain; its full sequence is Ribosome maturation factor RimP (167 aa).

The protein belongs to the RimP family.

Its subcellular location is the cytoplasm. Functionally, required for maturation of 30S ribosomal subunits. The protein is Ribosome maturation factor RimP of Streptomyces griseus subsp. griseus (strain JCM 4626 / CBS 651.72 / NBRC 13350 / KCC S-0626 / ISP 5235).